We begin with the raw amino-acid sequence, 501 residues long: Cytochrome P450 7A1 (501 aa).

Residues 4–24 form a helical membrane-spanning segment; it reads ISLLGGIVTAVCCCLWLLLGM. C441 serves as a coordination point for heme.

The protein belongs to the cytochrome P450 family. It depends on heme as a cofactor.

It localises to the endoplasmic reticulum membrane. It is found in the microsome membrane. The enzyme catalyses cholesterol + reduced [NADPH--hemoprotein reductase] + O2 = 7alpha-hydroxycholesterol + oxidized [NADPH--hemoprotein reductase] + H2O + H(+). The catalysed reaction is 4beta-hydroxycholesterol + reduced [NADPH--hemoprotein reductase] + O2 = 4beta,7alpha-dihydroxycholesterol + oxidized [NADPH--hemoprotein reductase] + H2O + H(+). It carries out the reaction lathosterol + reduced [NADPH--hemoprotein reductase] + O2 = 7alpha,8alpha-epoxy-5alpha-cholestan-3beta-ol + oxidized [NADPH--hemoprotein reductase] + H2O + H(+). It catalyses the reaction lathosterol + reduced [NADPH--hemoprotein reductase] + O2 = 5alpha-cholestan-7-oxo-3beta-ol + oxidized [NADPH--hemoprotein reductase] + H2O + H(+). The enzyme catalyses 7-dehydrocholesterol + reduced [NADPH--hemoprotein reductase] + O2 = 7-oxocholesterol + oxidized [NADPH--hemoprotein reductase] + H2O + H(+). The catalysed reaction is (24S)-hydroxycholesterol + reduced [NADPH--hemoprotein reductase] + O2 = (24S)-7alpha-dihydroxycholesterol + oxidized [NADPH--hemoprotein reductase] + H2O + H(+). It carries out the reaction (24R)-hydroxycholesterol + reduced [NADPH--hemoprotein reductase] + O2 = (24R)-7alpha-dihydroxycholesterol + oxidized [NADPH--hemoprotein reductase] + H2O + H(+). It functions in the pathway lipid metabolism; bile acid biosynthesis. Its pathway is steroid metabolism; cholesterol degradation. A cytochrome P450 monooxygenase involved in the metabolism of endogenous cholesterol and its oxygenated derivatives (oxysterols). Mechanistically, uses molecular oxygen inserting one oxygen atom into a substrate, and reducing the second into a water molecule, with two electrons provided by NADPH via cytochrome P450 reductase (CPR; NADPH-ferrihemoprotein reductase). Functions as a critical regulatory enzyme of bile acid biosynthesis and cholesterol homeostasis. Catalyzes the hydroxylation of carbon hydrogen bond at 7-alpha position of cholesterol, a rate-limiting step in cholesterol catabolism and bile acid biosynthesis. 7-alpha hydroxylates several oxysterols, including 4beta-hydroxycholesterol and 24-hydroxycholesterol. Catalyzes the oxidation of the 7,8 double bond of 7-dehydrocholesterol and lathosterol with direct and predominant formation of the 7-keto derivatives. The protein is Cytochrome P450 7A1 (CYP7A1) of Sus scrofa (Pig).